Consider the following 237-residue polypeptide: Regulator of G-protein signaling 9-binding protein (237 aa).

Residues 1 to 212 (MAREECKALL…ERAGPCDPSK (212 aa)) are Cytoplasmic-facing. Residues 30–54 (SADTQDLREELQKTRQKARELAVAT) are a coiled coil. Residues 153-202 (EVLQVGEMIDDMEMKVNVPRWTVQARQAAGAELLSGASAGASSAGGISVE) are SNARE-like. Residues 213–233 (ALAATVFSAVLLVAVALALCV) traverse the membrane as a helical; Anchor for type IV membrane protein segment. Residues 234–237 (AKLS) are Extracellular-facing.

It belongs to the RGS7BP/RGS9BP family. In terms of assembly, specifically interacts with isoform RGS9-1 of RGS9. Interaction is decreased when RGS9-1 is phosphorylated at 'Ser-475'. Component of the RGS9-1-Gbeta5 complex composed of RGS9-1, Gbeta5 (GNB5) and RGS9BP. In terms of tissue distribution, predominantly expressed in photoreceptors of the retina. Weakly expressed in other areas of the central nervous system.

The protein localises to the membrane. Its function is as follows. Regulator of G protein-coupled receptor (GPCR) signaling in phototransduction. Participates in the recovery phase of visual transduction via its interaction with RGS9-1 isoform. Acts as a membrane-anchor that mediates the targeting of RGS9-1 to the photoreceptor outer segment, where phototransduction takes place. Enhances the ability of RGS9-1 to stimulate G protein GTPase activity, allowing the visual signal to be terminated on the physiologically time scale. It also controls the proteolytic stability of RGS9-1, probably by protecting it from degradation. This is Regulator of G-protein signaling 9-binding protein (Rgs9bp) from Mus musculus (Mouse).